A 155-amino-acid chain; its full sequence is uncharacterized protein (155 aa).

Disordered regions lie at residues 1 to 22 and 110 to 155; these read MSSQ…TFTF and NKEP…DTQA. S2 carries the post-translational modification N-acetylserine. A phosphoserine mark is found at S136, S144, and S146. A compositionally biased stretch (acidic residues) spans 136–155; sequence SDEDLDAESDSDGEDGDTQA.

This is an uncharacterized protein from Mus musculus (Mouse).